Here is a 1151-residue protein sequence, read N- to C-terminus: Semaphorin-5B (1151 aa).

The Extracellular segment spans residues 1-1036; the sequence is MPCGFSPSPV…TDCAGFNLIH (1036 aa). Residues 103 to 553 enclose the Sema domain; it reads HPTVAFEDLQ…LRDGVLRVPL (451 aa). N-linked (GlcNAc...) asparagine glycosylation is present at asparagine 153. 2 disulfides stabilise this stretch: cysteine 172-cysteine 182 and cysteine 199-cysteine 208. Asparagine 236 and asparagine 345 each carry an N-linked (GlcNAc...) asparagine glycan. 2 cysteine pairs are disulfide-bonded: cysteine 322/cysteine 425 and cysteine 346/cysteine 388. Asparagine 436 is a glycosylation site (N-linked (GlcNAc...) asparagine). The PSI domain maps to 555–602; that stretch reads RCAAYRSQGACLGARDPYCGWDGKQQRCSTLEDSSNMSLWTQNITACP. 2 TSP type-1 domains span residues 664-720 and 722-771; these read NGAW…TPCP and PIFW…EGCP. Disulfide bonds link cysteine 676-cysteine 713, cysteine 680-cysteine 719, cysteine 691-cysteine 703, cysteine 734-cysteine 765, cysteine 738-cysteine 770, and cysteine 749-cysteine 755. O-linked (GalNAc...) threonine glycosylation is present at threonine 788. TSP type-1 domains follow at residues 853–908, 910–965, and 966–1010; these read SGGW…QACP, RGAW…QACP, and EGWS…RPCP. Cystine bridges form between cysteine 865-cysteine 902, cysteine 869-cysteine 907, cysteine 880-cysteine 892, cysteine 922-cysteine 959, cysteine 926-cysteine 964, and cysteine 937-cysteine 949. Residues 1037-1057 form a helical; Signal-anchor for type III membrane protein membrane-spanning segment; the sequence is LVATGISCFLGSGLLTLAVYL. Topologically, residues 1058 to 1151 are cytoplasmic; the sequence is SCQHCQRQSQ…SPGQRCFPNS (94 aa).

The protein belongs to the semaphorin family.

The protein localises to the membrane. Its function is as follows. May act as a positive axonal guidance cue. This chain is Semaphorin-5B (SEMA5B), found in Homo sapiens (Human).